A 108-amino-acid polypeptide reads, in one-letter code: Small ribosomal subunit protein mS33 (108 aa).

The interval 84–108 is disordered; sequence LRARDKGAPKKKRTAPSAADAKKKK.

Belongs to the mitochondrion-specific ribosomal protein mS33 family. As to quaternary structure, component of the mitochondrial small ribosomal subunit (mt-SSU). Mature N.crassa 74S mitochondrial ribosomes consist of a small (37S) and a large (54S) subunit. The 37S small subunit contains a 16S ribosomal RNA (16S mt-rRNA) and 32 different proteins. The 54S large subunit contains a 23S rRNA (23S mt-rRNA) and 42 different proteins.

It is found in the mitochondrion. In terms of biological role, component of the mitochondrial ribosome (mitoribosome), a dedicated translation machinery responsible for the synthesis of mitochondrial genome-encoded proteins, including at least some of the essential transmembrane subunits of the mitochondrial respiratory chain. The mitoribosomes are attached to the mitochondrial inner membrane and translation products are cotranslationally integrated into the membrane. This is Small ribosomal subunit protein mS33 (rsm27) from Neurospora crassa (strain ATCC 24698 / 74-OR23-1A / CBS 708.71 / DSM 1257 / FGSC 987).